The primary structure comprises 785 residues: Semaphorin-3E (785 aa).

The signal sequence occupies residues 1-25 (MLGRMASAQDLLILALCGLLLELPA). The region spanning 36–520 (RLRLSHKELW…TESVIAQVKF (485 aa)) is the Sema domain. An N-linked (GlcNAc...) asparagine glycan is attached at N48. A disulfide bridge connects residues C109 and C119. N130 is a glycosylation site (N-linked (GlcNAc...) asparagine). 4 cysteine pairs are disulfide-bonded: C137/C146, C274/C386, C298/C346, and C523/C541. The N-linked (GlcNAc...) asparagine glycan is linked to N600. The Ig-like C2-type domain occupies 651-740 (LDAGTYFCQT…EYCEKVWCTD (90 aa)). Residues C658 and C733 are joined by a disulfide bond. A disordered region spans residues 744–785 (KKLKMSPSKWKYANPQEKRQDQEKKARIRPEHYRLPRNIADS). Over residues 759–777 (QEKRQDQEKKARIRPEHYR) the composition is skewed to basic and acidic residues.

This sequence belongs to the semaphorin family. In terms of tissue distribution, collapsin-1, -2, -3, and -5 bind to overlapping but distinct axon tracts.

The protein resides in the secreted. Its function is as follows. Plays an important role in signaling via the cell surface receptor PLXND1. Mediates reorganization of the actin cytoskeleton, leading to the retraction of cell projections. Promotes focal adhesion disassembly and inhibits adhesion of endothelial cells to the extracellular matrix. Regulates angiogenesis. Can down-regulate sprouting angiogenesis. Required for normal vascular patterning during embryogenesis. Induces the collapse and paralysis of neuronal growth cones. Plays an important role in ensuring the specificity of synapse formation. This chain is Semaphorin-3E (SEMA3E), found in Gallus gallus (Chicken).